The primary structure comprises 105 residues: uncharacterized protein (105 aa).

Transmembrane regions (helical) follow at residues 26–46 and 66–86; these read NVLIASWLSFVVFLILGCIAI and SALAWTFFVLAILFGAATLAI.

It is found in the cell membrane. This is an uncharacterized protein from Mycoplasma pneumoniae (strain ATCC 29342 / M129 / Subtype 1) (Mycoplasmoides pneumoniae).